The chain runs to 460 residues: NADH-ubiquinone oxidoreductase chain 4 (460 aa).

Transmembrane regions (helical) follow at residues 22 to 42, 61 to 81, 94 to 113, 117 to 139, 148 to 168, 195 to 217, 225 to 245, 258 to 278, 285 to 304, 308 to 330, 351 to 371, 394 to 414, and 436 to 456; these read WLWPTALTQSMLIALGSITWL, PLSTPLLVLSCWLLPLMLLAS, RMYITLLATLQLFLILAFGA, IMFYVMFEATLIPTLLVITRWGN, TYFLFYTLAGSLPLLVALLML, IWWAACMIAFLVKMPLYGMHLWL, PVAGSMVLAAVLLKLGGYGMM, MVYPFIVLALWGVIITGSICL, SLIAYSSVSHMGLVAGGILI, WGFTGALILMIAHGLASSALFCL, IALPLMTTWWFIASLANLALP, LILTGIGTLITAAYSLYMFLM, and LLMALHLIPLLLIILKPALLW.

This sequence belongs to the complex I subunit 4 family.

The protein localises to the mitochondrion membrane. The catalysed reaction is a ubiquinone + NADH + 5 H(+)(in) = a ubiquinol + NAD(+) + 4 H(+)(out). Core subunit of the mitochondrial membrane respiratory chain NADH dehydrogenase (Complex I) that is believed to belong to the minimal assembly required for catalysis. Complex I functions in the transfer of electrons from NADH to the respiratory chain. The immediate electron acceptor for the enzyme is believed to be ubiquinone. This chain is NADH-ubiquinone oxidoreductase chain 4 (MT-ND4), found in Gadus morhua (Atlantic cod).